A 477-amino-acid chain; its full sequence is Dihydrolipoyl dehydrogenase (477 aa).

FAD-binding positions include 34–49 (EKYK…GGTC), lysine 58, and glycine 122. Cysteines 49 and 54 form a disulfide. Residues 188-192 (GAGVI), glutamate 211, valine 245, and 276-279 (AVGR) each bind NAD(+). FAD is bound by residues aspartate 319 and alanine 327. Histidine 451 (proton acceptor) is an active-site residue.

The protein belongs to the class-I pyridine nucleotide-disulfide oxidoreductase family. Homodimer. It depends on FAD as a cofactor.

It is found in the cytoplasm. It catalyses the reaction N(6)-[(R)-dihydrolipoyl]-L-lysyl-[protein] + NAD(+) = N(6)-[(R)-lipoyl]-L-lysyl-[protein] + NADH + H(+). In terms of biological role, the pyruvate dehydrogenase complex catalyzes the overall conversion of pyruvate to acetyl-CoA and CO(2). It contains multiple copies of three enzymatic components: pyruvate dehydrogenase (E1), dihydrolipoamide acetyltransferase (E2) and lipoamide dehydrogenase (E3). The chain is Dihydrolipoyl dehydrogenase from Azotobacter vinelandii.